Reading from the N-terminus, the 383-residue chain is tRNA(Met) cytidine acetate ligase (383 aa).

ATP-binding positions include 7-20 (IAEF…HEFL), glycine 101, asparagine 153, and 178-179 (RI).

It belongs to the TmcAL family.

The protein resides in the cytoplasm. The enzyme catalyses cytidine(34) in elongator tRNA(Met) + acetate + ATP = N(4)-acetylcytidine(34) in elongator tRNA(Met) + AMP + diphosphate. Catalyzes the formation of N(4)-acetylcytidine (ac(4)C) at the wobble position of elongator tRNA(Met), using acetate and ATP as substrates. First activates an acetate ion to form acetyladenylate (Ac-AMP) and then transfers the acetyl group to tRNA to form ac(4)C34. This is tRNA(Met) cytidine acetate ligase from Lactobacillus acidophilus (strain ATCC 700396 / NCK56 / N2 / NCFM).